We begin with the raw amino-acid sequence, 54 residues long: Large ribosomal subunit protein bL33 (54 aa).

It belongs to the bacterial ribosomal protein bL33 family.

This Buchnera aphidicola subsp. Cinara cedri (strain Cc) protein is Large ribosomal subunit protein bL33.